Consider the following 182-residue polypeptide: Plasmolipin (182 aa).

Residues 1 to 20 (MAEFPSKVNTRTSSPAQGGG) are disordered. The Cytoplasmic portion of the chain corresponds to 1–35 (MAEFPSKVNTRTSSPAQGGGAVVSTLSPDLGFVRS). Residues 7–16 (KVNTRTSSPA) show a composition bias toward polar residues. One can recognise an MARVEL domain in the interval 32-166 (FVRSSLGALM…SAFLSFQAWR (135 aa)). The chain crosses the membrane as a helical span at residues 36–56 (SLGALMLLQLVLGLLVWALIA). The Extracellular portion of the chain corresponds to 57–68 (DTPYHLYPSYGW). Residues 69 to 89 (VMFVAVFLWLVTIIFFVLYLF) traverse the membrane as a helical segment. Residues 90–99 (QLHMKLYMVP) are Cytoplasmic-facing. A helical membrane pass occupies residues 100–120 (WPLVLMVFNVGATVLYITAFI). The Extracellular portion of the chain corresponds to 121–141 (TCSASVELTSLKGSQPYNQRA). A helical transmembrane segment spans residues 142–162 (AASFFSCLVMIAYGVSAFLSF). At 163 to 182 (QAWRGVGSNAATSQMAGGYA) the chain is on the cytoplasmic side.

This sequence belongs to the MAL family. In terms of assembly, forms oligomers. In terms of processing, phosphorylated.

The protein resides in the cell membrane. It localises to the myelin membrane. It is found in the apical cell membrane. Its function is as follows. Main component of the myelin sheath that plays an important role in myelin membrane biogenesis and myelination. Plays an essential function in apical endocytosis. Regulates epithelial development through the regulation of apical endocytosis. Part of the intracellular machinery that mediates basolateral-to-apical transport of ICAM-1, an essential adhesion receptor in epithelial cells, from the subapical compartment in hepatic epithelial cells. This is Plasmolipin (PLLP) from Bos taurus (Bovine).